The chain runs to 534 residues: Putative ammonium transporter 1 (534 aa).

A run of 11 helical transmembrane segments spans residues 31 to 51 (SFFLCSMALIIFFMQCGFAYL), 69 to 89 (LLDSCICIIGYWAIGWALAYG), 115 to 135 (FFFQYVFSATAATIVSGAVAE), 139 to 159 (FITYVTYCTVISTFIYPVLTH), 184 to 204 (FAGSGLVHLCGGSISFLAAWI), 223 to 243 (ILGHSVPFTALGGFILMFGFL), 263 to 283 (ALAMINTILSGAFAALIYLGV), 291 to 311 (WTLLLTINACLSGMVAACAGC), 318 to 338 (ACIWVGLGAGLIYLAFSKLMI), 346 to 366 (LDAFAVHAGGGFWGLMSSSII), and 401 to 421 (ICALAIIAWSLGVMLPIFWIL).

The protein belongs to the ammonia transporter channel (TC 1.A.11.2) family.

The protein resides in the membrane. In terms of biological role, involved in the uptake of ammonia. This chain is Putative ammonium transporter 1 (amt-1), found in Caenorhabditis elegans.